Here is a 370-residue protein sequence, read N- to C-terminus: Homoserine O-acetyltransferase (370 aa).

The AB hydrolase-1 domain maps to 44-350; that stretch reads NAILVAHAWT…AYGHDAFLLE (307 aa). S150 functions as the Nucleophile in the catalytic mechanism. R217 is a binding site for substrate. Active-site residues include D311 and H344. A substrate-binding site is contributed by D345.

The protein belongs to the AB hydrolase superfamily. MetX family. As to quaternary structure, homodimer.

The protein localises to the cytoplasm. It carries out the reaction L-homoserine + acetyl-CoA = O-acetyl-L-homoserine + CoA. Its pathway is amino-acid biosynthesis; L-methionine biosynthesis via de novo pathway; O-acetyl-L-homoserine from L-homoserine: step 1/1. In terms of biological role, transfers an acetyl group from acetyl-CoA to L-homoserine, forming acetyl-L-homoserine. This is Homoserine O-acetyltransferase from Geotalea uraniireducens (strain Rf4) (Geobacter uraniireducens).